The sequence spans 293 residues: Protease HtpX homolog (293 aa).

Helical transmembrane passes span 4–24 (IFLF…VLSL) and 39–59 (PMLL…SLLI). Histidine 144 provides a ligand contact to Zn(2+). Glutamate 145 is an active-site residue. Position 148 (histidine 148) interacts with Zn(2+). A run of 2 helical transmembrane segments spans residues 159–179 (LVQG…GYFV) and 200–220 (ITVL…VAWF). Glutamate 225 serves as a coordination point for Zn(2+).

It belongs to the peptidase M48B family. Zn(2+) serves as cofactor.

The protein resides in the cell inner membrane. This is Protease HtpX homolog from Herminiimonas arsenicoxydans.